Reading from the N-terminus, the 279-residue chain is Urease accessory protein UreD (279 aa).

The protein belongs to the UreD family. In terms of assembly, ureD, UreF and UreG form a complex that acts as a GTP-hydrolysis-dependent molecular chaperone, activating the urease apoprotein by helping to assemble the nickel containing metallocenter of UreC. The UreE protein probably delivers the nickel.

Its subcellular location is the cytoplasm. Functionally, required for maturation of urease via the functional incorporation of the urease nickel metallocenter. The protein is Urease accessory protein UreD of Pseudomonas fluorescens (strain Pf0-1).